Consider the following 476-residue polypeptide: MSRLAPLSQCLHALRGTFERAIGQAQALDRPVLVAASFEIDPLDPLQVFGAWDDRQTPCLYWEQPELAFFAWGCALELQGHGEQRFARIEENWQLLCADAVVEGPLAPRLCGGFRFDPRGPREEHWQAFADASLMLAGITVLREGERYRVLCQHLAKPGEDALALAAYHCSALLRLRQPARRRPSGPTAGAQGDASAQERRQWEAKVSDAVSSVRQGRFGKVVLARTQARPLGDIEPWQVIEHLRLQHADAQLFACRRGNACFLGASPERLVRIRAGEALTHALAGTIARGGDAQEDARLGQALLDSAKDRHEHQLVVEAIRTALEPFSEVLEIPDAPGLKRLARVQHLNTPIRARLADAGGILRLLQALHPTPAVGGYPRSAALDYIRQHEGMDRGWYAAPLGWLDGEGNGDFLVALRSALLTPGRGYLFAGCGLVGDSEPAHEYRETCLKLSAMREALSAIGGLDEVPLQRGVA.

The tract at residues 181 to 202 (RRRPSGPTAGAQGDASAQERRQ) is disordered.

Belongs to the isochorismate synthase family.

The enzyme catalyses chorismate = isochorismate. It functions in the pathway siderophore biosynthesis; salicylate biosynthesis. In terms of biological role, involved in the conversion of chorismate to salicylate. In Pseudomonas aeruginosa (strain ATCC 15692 / DSM 22644 / CIP 104116 / JCM 14847 / LMG 12228 / 1C / PRS 101 / PAO1), this protein is Salicylate biosynthesis isochorismate synthase (pchA).